We begin with the raw amino-acid sequence, 874 residues long: DNA mismatch repair protein MutS (874 aa).

Basic and acidic residues predominate over residues 1-12 (MSNDRPLTHSEA). Residues 1-20 (MSNDRPLTHSEAESSALRLG) are disordered. Residue 661 to 668 (GPNASGKS) coordinates ATP. Residues 854–874 (RKSSMGDPPTAPEINQGELPF) are disordered.

Belongs to the DNA mismatch repair MutS family.

This protein is involved in the repair of mismatches in DNA. It is possible that it carries out the mismatch recognition step. This protein has a weak ATPase activity. The polypeptide is DNA mismatch repair protein MutS (Thermosynechococcus vestitus (strain NIES-2133 / IAM M-273 / BP-1)).